The sequence spans 371 residues: tRNA-specific 2-thiouridylase MnmA (371 aa).

ATP is bound by residues 8 to 15 (GMSGGVDS) and methionine 34. The segment at 94 to 96 (NPD) is interaction with target base in tRNA. Residue cysteine 99 is the Nucleophile of the active site. A disulfide bond links cysteine 99 and cysteine 195. Glycine 123 is a binding site for ATP. An interaction with tRNA region spans residues 145–147 (KDQ). Catalysis depends on cysteine 195, which acts as the Cysteine persulfide intermediate. Residues 309–310 (RY) are interaction with tRNA.

The protein belongs to the MnmA/TRMU family.

It localises to the cytoplasm. The enzyme catalyses S-sulfanyl-L-cysteinyl-[protein] + uridine(34) in tRNA + AH2 + ATP = 2-thiouridine(34) in tRNA + L-cysteinyl-[protein] + A + AMP + diphosphate + H(+). Functionally, catalyzes the 2-thiolation of uridine at the wobble position (U34) of tRNA, leading to the formation of s(2)U34. This chain is tRNA-specific 2-thiouridylase MnmA, found in Methylococcus capsulatus (strain ATCC 33009 / NCIMB 11132 / Bath).